The following is a 452-amino-acid chain: Bifunctional protein GlmU (452 aa).

The interval 1 to 231 (MSRTCLAVIL…EAELAGCNNR (231 aa)) is pyrophosphorylase. UDP-N-acetyl-alpha-D-glucosamine is bound by residues 10-13 (LAAG), lysine 24, glutamine 77, 82-83 (GT), 105-107 (YGD), glycine 143, glutamate 157, asparagine 172, and asparagine 229. Aspartate 107 contributes to the Mg(2+) binding site. Asparagine 229 serves as a coordination point for Mg(2+). Positions 232 to 252 (AELAVIEKLWQERRRHELMLS) are linker. Residues 253–452 (GVSMIAPETV…MAIKAFSGKV (200 aa)) form an N-acetyltransferase region. Arginine 318 and lysine 336 together coordinate UDP-N-acetyl-alpha-D-glucosamine. Histidine 348 acts as the Proton acceptor in catalysis. UDP-N-acetyl-alpha-D-glucosamine is bound by residues tyrosine 351 and asparagine 362. Acetyl-CoA contacts are provided by residues alanine 365, 371 to 372 (NY), serine 390, serine 408, and arginine 425.

In the N-terminal section; belongs to the N-acetylglucosamine-1-phosphate uridyltransferase family. This sequence in the C-terminal section; belongs to the transferase hexapeptide repeat family. In terms of assembly, homotrimer. The cofactor is Mg(2+).

It localises to the cytoplasm. The catalysed reaction is alpha-D-glucosamine 1-phosphate + acetyl-CoA = N-acetyl-alpha-D-glucosamine 1-phosphate + CoA + H(+). It carries out the reaction N-acetyl-alpha-D-glucosamine 1-phosphate + UTP + H(+) = UDP-N-acetyl-alpha-D-glucosamine + diphosphate. The protein operates within nucleotide-sugar biosynthesis; UDP-N-acetyl-alpha-D-glucosamine biosynthesis; N-acetyl-alpha-D-glucosamine 1-phosphate from alpha-D-glucosamine 6-phosphate (route II): step 2/2. It functions in the pathway nucleotide-sugar biosynthesis; UDP-N-acetyl-alpha-D-glucosamine biosynthesis; UDP-N-acetyl-alpha-D-glucosamine from N-acetyl-alpha-D-glucosamine 1-phosphate: step 1/1. Its pathway is bacterial outer membrane biogenesis; LPS lipid A biosynthesis. Catalyzes the last two sequential reactions in the de novo biosynthetic pathway for UDP-N-acetylglucosamine (UDP-GlcNAc). The C-terminal domain catalyzes the transfer of acetyl group from acetyl coenzyme A to glucosamine-1-phosphate (GlcN-1-P) to produce N-acetylglucosamine-1-phosphate (GlcNAc-1-P), which is converted into UDP-GlcNAc by the transfer of uridine 5-monophosphate (from uridine 5-triphosphate), a reaction catalyzed by the N-terminal domain. The protein is Bifunctional protein GlmU of Allorhizobium ampelinum (strain ATCC BAA-846 / DSM 112012 / S4) (Agrobacterium vitis (strain S4)).